Reading from the N-terminus, the 372-residue chain is Protein-glutamate methylesterase/protein-glutamine glutaminase 1 (372 aa).

Residues 4-121 (KVLVVDDSSF…ATNKDDAILL (118 aa)) form the Response regulatory domain. Asp-55 is subject to 4-aspartylphosphate. The segment at 138–174 (VVRPTTPTPPPRSSASSVLGGVSTHTQPAPVRSSHAA) is disordered. Residues 179-372 (SGKQYKLLLI…ESILKESARG (194 aa)) form the CheB-type methylesterase domain. Catalysis depends on residues Ser-191, His-218, and Asp-314.

Belongs to the CheB family. Post-translationally, phosphorylated by CheA. Phosphorylation of the N-terminal regulatory domain activates the methylesterase activity.

Its subcellular location is the cytoplasm. The catalysed reaction is [protein]-L-glutamate 5-O-methyl ester + H2O = L-glutamyl-[protein] + methanol + H(+). It carries out the reaction L-glutaminyl-[protein] + H2O = L-glutamyl-[protein] + NH4(+). Involved in chemotaxis. Part of a chemotaxis signal transduction system that modulates chemotaxis in response to various stimuli. Catalyzes the demethylation of specific methylglutamate residues introduced into the chemoreceptors (methyl-accepting chemotaxis proteins or MCP) by CheR. Also mediates the irreversible deamidation of specific glutamine residues to glutamic acid. This Shewanella sp. (strain MR-4) protein is Protein-glutamate methylesterase/protein-glutamine glutaminase 1.